We begin with the raw amino-acid sequence, 256 residues long: Alcohol dehydrogenase (256 aa).

Residue 12-35 (FVAGLGGIGLDTSKELVKRDLKNL) coordinates NAD(+). A substrate-binding site is contributed by serine 140. The active-site Proton acceptor is the tyrosine 153.

It belongs to the short-chain dehydrogenases/reductases (SDR) family. In terms of assembly, homodimer.

It catalyses the reaction a primary alcohol + NAD(+) = an aldehyde + NADH + H(+). The catalysed reaction is a secondary alcohol + NAD(+) = a ketone + NADH + H(+). The chain is Alcohol dehydrogenase (Adh) from Drosophila orena (Fruit fly).